A 272-amino-acid chain; its full sequence is Undecaprenyl-diphosphatase (272 aa).

8 helical membrane-spanning segments follow: residues 2-22 (LELI…WLPI), 50-70 (VIQL…LFPF), 83-103 (FSLW…GVPF), 110-130 (LFYN…LFII), 148-168 (LGYK…IPGT), 195-215 (LAIP…GFAF), 220-240 (LIIL…AIKF), and 250-270 (FKAF…YFLA).

This sequence belongs to the UppP family.

It localises to the cell membrane. The catalysed reaction is di-trans,octa-cis-undecaprenyl diphosphate + H2O = di-trans,octa-cis-undecaprenyl phosphate + phosphate + H(+). Functionally, catalyzes the dephosphorylation of undecaprenyl diphosphate (UPP). Confers resistance to bacitracin. This chain is Undecaprenyl-diphosphatase, found in Acetivibrio thermocellus (strain ATCC 27405 / DSM 1237 / JCM 9322 / NBRC 103400 / NCIMB 10682 / NRRL B-4536 / VPI 7372) (Clostridium thermocellum).